Here is an 885-residue protein sequence, read N- to C-terminus: Alanine--tRNA ligase (885 aa).

His572, His576, Cys675, and His679 together coordinate Zn(2+).

Belongs to the class-II aminoacyl-tRNA synthetase family. Zn(2+) is required as a cofactor.

The protein resides in the cytoplasm. The enzyme catalyses tRNA(Ala) + L-alanine + ATP = L-alanyl-tRNA(Ala) + AMP + diphosphate. Functionally, catalyzes the attachment of alanine to tRNA(Ala) in a two-step reaction: alanine is first activated by ATP to form Ala-AMP and then transferred to the acceptor end of tRNA(Ala). Also edits incorrectly charged Ser-tRNA(Ala) and Gly-tRNA(Ala) via its editing domain. This chain is Alanine--tRNA ligase, found in Leifsonia xyli subsp. xyli (strain CTCB07).